Reading from the N-terminus, the 976-residue chain is Vacuolar membrane protease (976 aa).

At methionine 1 to lysine 15 the chain is on the cytoplasmic side. A helical membrane pass occupies residues threonine 16–aspartate 36. The Vacuolar segment spans residues histidine 37–leucine 359. N-linked (GlcNAc...) asparagine glycosylation is found at asparagine 96 and asparagine 121. Positions 156 and 168 each coordinate Zn(2+). Asparagine 189 is a glycosylation site (N-linked (GlcNAc...) asparagine). Catalysis depends on glutamate 200, which acts as the Proton acceptor. A Zn(2+)-binding site is contributed by glutamate 201. Residues asparagine 212 and asparagine 217 are each glycosylated (N-linked (GlcNAc...) asparagine). Residues glutamate 226 and histidine 300 each coordinate Zn(2+). A helical membrane pass occupies residues phenylalanine 360 to isoleucine 380. Over serine 381 to tryptophan 392 the chain is Cytoplasmic. The helical transmembrane segment at leucine 393–phenylalanine 412 threads the bilayer. Topologically, residues serine 413–tyrosine 428 are vacuolar. The chain crosses the membrane as a helical span at residues phenylalanine 429–cysteine 449. The Cytoplasmic segment spans residues serine 450–serine 461. The helical transmembrane segment at leucine 462–leucine 482 threads the bilayer. Over tyrosine 483 to serine 496 the chain is Vacuolar. The helical transmembrane segment at isoleucine 497–methionine 517 threads the bilayer. Over arginine 518–tyrosine 627 the chain is Cytoplasmic. Positions arginine 528–glutamate 610 are disordered. Residues asparagine 549–threonine 558 are compositionally biased toward polar residues. The span at serine 559–aspartate 570 shows a compositional bias: low complexity. Over residues asparagine 582–proline 601 the composition is skewed to basic and acidic residues. Residues alanine 628–valine 648 traverse the membrane as a helical segment. Over aspartate 649–aspartate 668 the chain is Vacuolar. N-linked (GlcNAc...) asparagine glycosylation occurs at asparagine 656. Residues valine 669 to tyrosine 689 traverse the membrane as a helical segment. Over lysine 690–asparagine 692 the chain is Cytoplasmic. Residues tyrosine 693–valine 713 form a helical membrane-spanning segment. The Vacuolar segment spans residues histidine 714–leucine 976. 5 N-linked (GlcNAc...) asparagine glycosylation sites follow: asparagine 768, asparagine 796, asparagine 811, asparagine 866, and asparagine 937.

The protein belongs to the peptidase M28 family. It depends on Zn(2+) as a cofactor.

It localises to the vacuole membrane. Functionally, may be involved in vacuolar sorting and osmoregulation. The chain is Vacuolar membrane protease from Saccharomyces cerevisiae (strain RM11-1a) (Baker's yeast).